The sequence spans 454 residues: L-serine dehydratase 1 (454 aa).

This sequence belongs to the iron-sulfur dependent L-serine dehydratase family. The cofactor is [4Fe-4S] cluster. In terms of processing, activated by post-translational modification by a system involving at least three gene products. Activation is mimicked in vitro by iron and dithiothreitol. There is considerable evidence for a free-radical activation mechanism.

It carries out the reaction L-serine = pyruvate + NH4(+). It functions in the pathway carbohydrate biosynthesis; gluconeogenesis. Functionally, also deaminates threonine, particularly when it is present in high concentration. In Escherichia coli (strain K12), this protein is L-serine dehydratase 1 (sdaA).